Consider the following 775-residue polypeptide: Serine/threonine-protein kinase-like protein CCR1 (775 aa).

An N-terminal signal peptide occupies residues 1-23 (METRCSLLFLSLILLYLPKPGSG). At 24–439 (FGSSGPIAAS…DKHWHQLQRL (416 aa)) the chain is on the extracellular side. Residues Asn-57, Asn-102, Asn-167, Asn-213, Asn-220, Asn-241, Asn-261, Asn-292, Asn-328, and Asn-360 are each glycosylated (N-linked (GlcNAc...) asparagine). Residues 351–406 (PCNEKEFAFNASILNEPDLTSLCVRKELMVCSPCGSDCSHGFFLSSSCTANSDRIC) form a TNFR-Cys repeat. Disulfide bonds link Cys-352-Cys-381, Cys-384-Cys-398, and Cys-388-Cys-406. Residue Asn-414 is glycosylated (N-linked (GlcNAc...) asparagine). A helical transmembrane segment spans residues 440-460 (VLIIGSCASALLIIIIGCCVV). Topologically, residues 461–775 (PRIVTSPNKE…EHVARDALIF (315 aa)) are cytoplasmic. The Protein kinase domain occupies 520–770 (FKEFNELGRG…LANWLEHVAR (251 aa)). ATP-binding positions include 526–534 (LGRGSYGFV) and Lys-548. The active-site Proton acceptor is the Asp-645.

Belongs to the protein kinase superfamily. Ser/Thr protein kinase family. In terms of assembly, homodimer. In terms of tissue distribution, expressed in roots, leaves, shoot apical meristems (SAM), and floral buds.

The protein localises to the membrane. It carries out the reaction L-seryl-[protein] + ATP = O-phospho-L-seryl-[protein] + ADP + H(+). The catalysed reaction is L-threonyl-[protein] + ATP = O-phospho-L-threonyl-[protein] + ADP + H(+). Functionally, serine/threonine-protein kinase with low activity. In Arabidopsis thaliana (Mouse-ear cress), this protein is Serine/threonine-protein kinase-like protein CCR1 (CCR1).